A 270-amino-acid polypeptide reads, in one-letter code: MPEIIIVKNEAEAGEIYGRCVADLIKAKPDAVLGLATGSSPLAAYQALAKIVKDEAIDVSGVRGFALDEYIGLPLTHPESYHATIHRTVVEPLGLDPAKVHVPGDVLNGTPLEDGDKVALAGPAYDRAIEAAGGIDVQILGIGTDGHVGFNEPGSSLASGTRVKTLAEQTRIDNARFFDNDINQVPTHCITQGIGTIMKARHLVLLAFGAGKAEAIEETVEGGVSAFCPASALQMHPHATIIVDEEAASRLRHKDYYRYAYTHKPAWQGI.

Asp68 (proton acceptor; for enolization step) is an active-site residue. Asp145 functions as the For ring-opening step in the catalytic mechanism. The Proton acceptor; for ring-opening step role is filled by His147. Residue Glu152 is the For ring-opening step of the active site.

It belongs to the glucosamine/galactosamine-6-phosphate isomerase family. NagB subfamily.

The enzyme catalyses alpha-D-glucosamine 6-phosphate + H2O = beta-D-fructose 6-phosphate + NH4(+). It functions in the pathway amino-sugar metabolism; N-acetylneuraminate degradation; D-fructose 6-phosphate from N-acetylneuraminate: step 5/5. Functionally, catalyzes the reversible isomerization-deamination of glucosamine 6-phosphate (GlcN6P) to form fructose 6-phosphate (Fru6P) and ammonium ion. This Bifidobacterium longum (strain NCC 2705) protein is Glucosamine-6-phosphate deaminase.